Consider the following 496-residue polypeptide: Glycerol kinase (496 aa).

Thr-12 lines the ADP pocket. 3 residues coordinate ATP: Thr-12, Thr-13, and Ser-14. Residue Thr-12 participates in sn-glycerol 3-phosphate binding. An ADP-binding site is contributed by Arg-16. Positions 82, 83, and 134 each coordinate sn-glycerol 3-phosphate. Glycerol-binding residues include Arg-82, Glu-83, and Tyr-134. A Phosphohistidine; by HPr modification is found at His-230. Asp-244 is a sn-glycerol 3-phosphate binding site. 2 residues coordinate glycerol: Asp-244 and Gln-245. 2 residues coordinate ADP: Thr-266 and Gly-309. The ATP site is built by Thr-266, Gly-309, Gln-313, and Gly-410. The ADP site is built by Gly-410 and Asn-414.

The protein belongs to the FGGY kinase family. In terms of assembly, homotetramer and homodimer (in equilibrium). In terms of processing, the phosphoenolpyruvate-dependent sugar phosphotransferase system (PTS), including enzyme I, and histidine-containing protein (HPr) are required for the phosphorylation, which leads to the activation of the enzyme.

It catalyses the reaction glycerol + ATP = sn-glycerol 3-phosphate + ADP + H(+). It functions in the pathway polyol metabolism; glycerol degradation via glycerol kinase pathway; sn-glycerol 3-phosphate from glycerol: step 1/1. Activated by phosphorylation and inhibited by fructose 1,6-bisphosphate (FBP). In terms of biological role, key enzyme in the regulation of glycerol uptake and metabolism. Catalyzes the phosphorylation of glycerol to yield sn-glycerol 3-phosphate. The sequence is that of Glycerol kinase from Bacillus velezensis (strain DSM 23117 / BGSC 10A6 / LMG 26770 / FZB42) (Bacillus amyloliquefaciens subsp. plantarum).